The sequence spans 74 residues: Translational regulator CsrA (74 aa).

This sequence belongs to the CsrA/RsmA family. In terms of assembly, homodimer. The beta-strands of each monomer intercalate to form a hydrophobic core while the alpha-helices form wings that extend away from the core. Two molecules of FliW interact with 1 homodimer. mRNA and FliW bind to different sites on CsrA.

The protein localises to the cytoplasm. Its function is as follows. A translational regulator that binds mRNA to regulate translation initiation and/or mRNA stability. Usually binds in the 5'-UTR at or near the Shine-Dalgarno sequence preventing ribosome-binding, thus repressing translation. Represses expression of flagellin (hag) in a post-transcriptional fashion. Specifically binds to 2 sites in the 5'-UTR of hag mRNA in a cooperative fashion; the second site overlaps the Shine-Dalgarno sequence and prevents 30S ribosomal subunit binding. Mutation of either binding site abolishes CsrA regulation of hag expression. Repression is greater in the 1A96 than 168 genetic background and higher in minimal than rich medium. Translation repression is antagonized by FliW. Partner switching by flagellin between FliW and CsrA provides a flagellar assembly checkpoint to tightly control the timing of flagellin synthesis. Flagellin binds to assembly factor FliW, freeing CsrA to repress translation of the flagellin mRNA. When the flagellar hook is assembled flagellin is secreted, depleting intracellular flagellin, which frees FliW to interact with CsrA and inhibits CsrA binding to mRNA. This derepresses flagellin translation and provides protein for flagellar assembly. Once the flagellar filament is completed cytoplasmic flagellin levels rise and CsrA translation repression of flagellin reinitiates. Overexpression leads to a dramatic reduction in motility, a significant reduction in flagellin synthesis and reduced flagella assembly. This Bacillus subtilis (strain 168) protein is Translational regulator CsrA.